The sequence spans 159 residues: Succinate dehydrogenase assembly factor 2, mitochondrial (159 aa).

A mitochondrion-targeting transit peptide spans 1 to 14 (MASFCLSRCCALRG).

Belongs to the SDHAF2 family. Interacts with the flavoprotein subunit within the SDH catalytic dimer.

The protein localises to the mitochondrion matrix. Its function is as follows. Plays an essential role in the assembly of succinate dehydrogenase (SDH), an enzyme complex (also referred to as respiratory complex II) that is a component of both the tricarboxylic acid (TCA) cycle and the mitochondrial electron transport chain, and which couples the oxidation of succinate to fumarate with the reduction of ubiquinone (coenzyme Q) to ubiquinol. Required for flavinylation (covalent attachment of FAD) of the flavoprotein subunit of the SDH catalytic dimer. In Culex quinquefasciatus (Southern house mosquito), this protein is Succinate dehydrogenase assembly factor 2, mitochondrial.